Here is a 139-residue protein sequence, read N- to C-terminus: Cytochrome c-551 (139 aa).

A signal peptide spans 1-20; that stretch reads MTRTLAVVLAMTFSAAPVFA. Cysteine 34, cysteine 37, histidine 38, and methionine 116 together coordinate heme c.

The protein belongs to the cytochrome c family. In terms of processing, binds 1 heme c group covalently per subunit.

The polypeptide is Cytochrome c-551 (Roseobacter denitrificans (strain ATCC 33942 / OCh 114) (Erythrobacter sp. (strain OCh 114))).